Reading from the N-terminus, the 227-residue chain is Thymidylate kinase (227 aa).

7–14 (GIEGSGKT) is a binding site for ATP.

This sequence belongs to the thymidylate kinase family.

The catalysed reaction is dTMP + ATP = dTDP + ADP. In terms of biological role, phosphorylation of dTMP to form dTDP in both de novo and salvage pathways of dTTP synthesis. This Desulforapulum autotrophicum (strain ATCC 43914 / DSM 3382 / VKM B-1955 / HRM2) (Desulfobacterium autotrophicum) protein is Thymidylate kinase.